We begin with the raw amino-acid sequence, 225 residues long: Urease accessory protein UreG (225 aa).

The interval 1 to 21 (MHLDHHHESAAAVSADARRPD) is disordered. 33-40 (GPVGSGKT) lines the GTP pocket.

The protein belongs to the SIMIBI class G3E GTPase family. UreG subfamily. In terms of assembly, homodimer. UreD, UreF and UreG form a complex that acts as a GTP-hydrolysis-dependent molecular chaperone, activating the urease apoprotein by helping to assemble the nickel containing metallocenter of UreC. The UreE protein probably delivers the nickel.

It localises to the cytoplasm. In terms of biological role, facilitates the functional incorporation of the urease nickel metallocenter. This process requires GTP hydrolysis, probably effectuated by UreG. This chain is Urease accessory protein UreG, found in Streptomyces coelicolor (strain ATCC BAA-471 / A3(2) / M145).